The chain runs to 485 residues: Aprataxin and PNK-like factor (485 aa).

The 84-residue stretch at 1–84 (MSGGFELQPQ…CVLSTHSEME (84 aa)) folds into the FHA-like domain. At S92 the chain carries Phosphoserine; by ATM. Residues 103-156 (EIPKSSSADLPDKTPSAPRRERSTETAKPQAAANNMSFIGESRDLSKQQPNPSE) are disordered. A Phosphoserine modification is found at S125. The KBM signature appears at 157–166 (RKRILPAWML). The tract at residues 206–348 (GKKRLISSGS…VPNGSEENKV (143 aa)) is disordered. Polar residues-rich tracts occupy residues 212–223 (SSGSSESTSAKQ), 237–249 (SIISSKEMPQSFS), and 286–309 (KGSSNEDSTARSCSESYSSTQSKS). Positions 310 to 319 (FCDKPQKSHP) are enriched in basic and acidic residues. Residues R350, Y355, Y360, and R361 each contribute to the a glycoprotein site. The PBZ-type 1 zinc finger occupies 351 to 372 (TSCMYGANCYRKNPVHFQHFSH). Positions 380-390 (GVNITCQDEAD) are flexible linker. The PBZ-type 2 zinc-finger motif lies at 393-414 (PECPYGASCYRKNPQHKIEYRH). A glycoprotein contacts are provided by Y397, Y402, and R403. The segment at 420 to 470 (RSISDEDDNVGQPNEYNLNDSFIDDEEEEYEPTDEDSDWEPEKEDLEKEDM) is disordered. Over residues 441 to 469 (FIDDEEEEYEPTDEDSDWEPEKEDLEKED) the composition is skewed to acidic residues. Residues 449 to 473 (YEPTDEDSDWEPEKEDLEKEDMEGL) carry the NAP1L motif motif.

Belongs to the APLF family. As to quaternary structure, interacts with LIG4. Interacts with PARP1. Interacts with XRCC4. Interacts (via KBM motif) with XRCC5 and XRCC6; promoting recruitment to DNA damage sites. Interacts with XRCC1. Interacts (via C-terminal disordered region) with histones; interacts with histone H2A, H2B and H3-H4. Poly-ADP-ribosylated. In addition to binding non covalently poly-ADP-ribose via its PBZ-type zinc fingers, the protein is also covalently poly-ADP-ribosylated by PARP1. In terms of processing, phosphorylated in an ATM-dependent manner upon double-strand DNA break.

The protein localises to the nucleus. Its subcellular location is the chromosome. It is found in the cytoplasm. The protein resides in the cytosol. Its function is as follows. Histone chaperone involved in single-strand and double-strand DNA break repair. Recruited to sites of DNA damage through interaction with branched poly-ADP-ribose chains, a polymeric post-translational modification synthesized transiently at sites of chromosomal damage to accelerate DNA strand break repair reactions. Following recruitment to DNA damage sites, acts as a histone chaperone that mediates histone eviction during DNA repair and promotes recruitment of histone variant MACROH2A1. Also has a nuclease activity: displays apurinic-apyrimidinic (AP) endonuclease and 3'-5' exonuclease activities in vitro. Also able to introduce nicks at hydroxyuracil and other types of pyrimidine base damage. Together with PARP3, promotes the retention of the LIG4-XRCC4 complex on chromatin and accelerate DNA ligation during non-homologous end-joining (NHEJ). Also acts as a negative regulator of cell pluripotency by promoting histone exchange. Required for the embryo implantation during the epithelial to mesenchymal transition in females. The protein is Aprataxin and PNK-like factor (APLF) of Bos taurus (Bovine).